The following is a 414-amino-acid chain: Serine/arginine (SR)-type shuttling mRNA binding protein NPL3 (414 aa).

Positions M1 to Q11 are enriched in basic and acidic residues. The segment at M1–E119 is disordered. S15 bears the Phosphoserine mark. Positions D33–P51 are enriched in low complexity. Positions Q52 to N68 are enriched in pro residues. The segment covering E75–P92 has biased composition (basic and acidic residues). S79 is modified (phosphoserine). The segment covering P93–G105 has biased composition (pro residues). RRM domains are found at residues T125–L195 and Y200–N275. Residues S182, S212, and S224 each carry the phosphoserine modification. The disordered stretch occupies residues T269 to G299. The segment covering G286–G299 has biased composition (gly residues). Dimethylated arginine is present on residues R288, R290, R294, and R298. R302 is modified (omega-N-methylarginine). A dimethylated arginine; alternate mark is found at R307 and R314. 2 positions are modified to omega-N-methylarginine; alternate: R307 and R314. Omega-N-methylarginine is present on residues R321, R329, R337, and R344. The interval S343–R414 is disordered. Low complexity predominate over residues G346 to G360. At R351 the chain carries Dimethylated arginine; alternate. Position 351 is an omega-N-methylarginine; alternate (R351). Residue S356 is modified to Phosphoserine. Dimethylated arginine; alternate occurs at positions 358, 363, 377, and 384. Omega-N-methylarginine; alternate occurs at positions 358, 363, 377, and 384. Over residues S379–G389 the composition is skewed to gly residues. R391 is modified (omega-N-methylarginine). Residues D399–R414 are compositionally biased toward basic and acidic residues.

Belongs to the RRM GAR family. Interacts with RRP6. Post-translationally, methylated by HMT1. The methylation is required for nuclear export.

It localises to the cytoplasm. The protein resides in the nucleus. The protein localises to the stress granule. Its function is as follows. Involved in mRNA processing and export. Required for efficient splicing of a large set of pre-mRNAs by efficient co-transcriptional recruitment of the splicing machinery. Remains associated with the mRNP during early steps of translation elongation. The polypeptide is Serine/arginine (SR)-type shuttling mRNA binding protein NPL3 (Saccharomyces cerevisiae (strain ATCC 204508 / S288c) (Baker's yeast)).